Consider the following 177-residue polypeptide: SPbeta prophage-derived uncharacterized N-acetyltransferase YokL (177 aa).

The 160-residue stretch at 11 to 170 (LTLRAIQPED…DGICFGMTRE (160 aa)) folds into the N-acetyltransferase domain.

It belongs to the acetyltransferase family.

In Bacillus subtilis (strain 168), this protein is SPbeta prophage-derived uncharacterized N-acetyltransferase YokL (yokL).